The primary structure comprises 348 residues: MAKRKLSKQQKWRIQKIQDERTKRATRKETQLESQLSGGELSAEQEGLIIAHYGQQLAVEALEPPHAGQIFRCYVRANIDSLVTGDLVIWRAGPDNSGVIVARQPRESALKRPDKFGQLKPIAANIDQILIVIAAEPEPHHNLVDRYLVASEAVGIPPLIILNKQDLINDANRDALQQFKDQYQQLGYEWIDASTNTQSGLDDLKQHLAHKTSIFVGQSGVGKSSLIKMLLPEEDVKVGDLSENVRKGTHTTTTAKLFHLPSGGDLIDSPGIREFGLWHIDEHTLEDGFVEFRPHLGHCRFRNCRHIQEPGCALQSAQESGEILTSRMESFLRIRESLQEQDIHEENL.

Positions 1 to 14 are enriched in basic residues; the sequence is MAKRKLSKQQKWRI. Residues 1 to 39 are disordered; it reads MAKRKLSKQQKWRIQKIQDERTKRATRKETQLESQLSGG. Residues 16 to 31 show a composition bias toward basic and acidic residues; the sequence is KIQDERTKRATRKETQ. One can recognise a CP-type G domain in the interval 116–275; that stretch reads FGQLKPIAAN…LIDSPGIREF (160 aa). GTP is bound by residues 163–166 and 217–225; these read NKQD and GQSGVGKSS. Zn(2+)-binding residues include cysteine 299, cysteine 304, histidine 306, and cysteine 312.

Belongs to the TRAFAC class YlqF/YawG GTPase family. RsgA subfamily. As to quaternary structure, monomer. Associates with 30S ribosomal subunit, binds 16S rRNA. The cofactor is Zn(2+).

The protein localises to the cytoplasm. In terms of biological role, one of several proteins that assist in the late maturation steps of the functional core of the 30S ribosomal subunit. Helps release RbfA from mature subunits. May play a role in the assembly of ribosomal proteins into the subunit. Circularly permuted GTPase that catalyzes slow GTP hydrolysis, GTPase activity is stimulated by the 30S ribosomal subunit. The sequence is that of Small ribosomal subunit biogenesis GTPase RsgA from Hahella chejuensis (strain KCTC 2396).